The primary structure comprises 264 residues: 14-3-3 protein homolog (264 aa).

A compositionally biased stretch (low complexity) spans serine 236–glutamate 258. The segment at serine 236 to glutamate 264 is disordered.

This sequence belongs to the 14-3-3 family.

The polypeptide is 14-3-3 protein homolog (BMH1) (Candida albicans (strain SC5314 / ATCC MYA-2876) (Yeast)).